The chain runs to 365 residues: MNILKISKQTLRNNIKIIREYIGNAKMCFPVKANAYGHGIEDIVENTHDLVDFFAVANSLEAFRVTAVAKNPVLVFGVIYYEYIEKMISENIRVSIQDYEYIEKLEQIAKELDKKVYAHININTGMNRMGVDYNDACRTIQRAYESDWLILEGVYSHLACADNRDHPTNIKQKNRFDSIVKFTKGLSQDIICHLSNSYGFLGQKGICYDMVRPGILSYGFLPEFYVDRVIREIKPIARLLSKVVKIITLQEGEGVGYSLIYRGFEGEQLAVIPIGYGDGFPRELGDRGFVNINDVMYPMAGRMSMDGLTVSLGINEYDVKVGDTVELISAIPRNRNSAFSIAKQTNTIEYDIMSTLNDRIIRKII.

K32 (proton acceptor; specific for D-alanine) is an active-site residue. At K32 the chain carries N6-(pyridoxal phosphate)lysine. Position 128 (R128) interacts with substrate. Y257 functions as the Proton acceptor; specific for L-alanine in the catalytic mechanism. Residue M305 participates in substrate binding.

Belongs to the alanine racemase family. It depends on pyridoxal 5'-phosphate as a cofactor.

It catalyses the reaction L-alanine = D-alanine. Its pathway is amino-acid biosynthesis; D-alanine biosynthesis; D-alanine from L-alanine: step 1/1. Functionally, catalyzes the interconversion of L-alanine and D-alanine. May also act on other amino acids. The sequence is that of Alanine racemase (alr) from Francisella tularensis subsp. holarctica (strain LVS).